The sequence spans 600 residues: Probable methyltransferase PMT21 (600 aa).

Over 1–16 the chain is Cytoplasmic; sequence MKYKDEKYEKAEKGSR. The chain crosses the membrane as a helical; Signal-anchor for type II membrane protein span at residues 17 to 37; it reads ILPKTVLLILLCGLSFYLGGL. Topologically, residues 38-600 are lumenal; that stretch reads YCGKNIIEVS…YSSNASSETN (563 aa). N594 carries an N-linked (GlcNAc...) asparagine glycan.

The protein belongs to the methyltransferase superfamily.

The protein localises to the endoplasmic reticulum membrane. The chain is Probable methyltransferase PMT21 (ERD3) from Arabidopsis thaliana (Mouse-ear cress).